Reading from the N-terminus, the 216-residue chain is MSGTRAGGTADVGLIIAVKRLAAAKTRLGPVFSTRTRENVVLAMLVDTLTAAAPVSALRSITVITPDEAAAAAAAEFGAEILADPTPDGHGDPLNNAIAAAEHAIAGSFSNIVVLQGDLPALQTQELSEAIAAARHHQRSFVADRLGSGTAALCTFGTALNPQFGPDSSAQHRRSGAIELTGPWPGLRCDVDTPADLAAARRLGIGAATTRVVAHL.

Phosphoenolpyruvate is bound by residues Thr150, Gly165, and Ser168.

This sequence belongs to the CofC family.

The enzyme catalyses phosphoenolpyruvate + GTP + H(+) = enolpyruvoyl-2-diphospho-5'-guanosine + diphosphate. It functions in the pathway cofactor biosynthesis; coenzyme F420 biosynthesis. Guanylyltransferase that catalyzes the activation of phosphoenolpyruvate (PEP) as enolpyruvoyl-2-diphospho-5'-guanosine, via the condensation of PEP with GTP. It is involved in the biosynthesis of coenzyme F420, a hydride carrier cofactor. The sequence is that of Phosphoenolpyruvate guanylyltransferase from Mycobacterium leprae (strain Br4923).